Consider the following 483-residue polypeptide: Glycogen synthase (483 aa).

Lys-18 contacts ADP-alpha-D-glucose.

It belongs to the glycosyltransferase 1 family. Bacterial/plant glycogen synthase subfamily.

The enzyme catalyses [(1-&gt;4)-alpha-D-glucosyl](n) + ADP-alpha-D-glucose = [(1-&gt;4)-alpha-D-glucosyl](n+1) + ADP + H(+). It participates in glycan biosynthesis; glycogen biosynthesis. Synthesizes alpha-1,4-glucan chains using ADP-glucose. The sequence is that of Glycogen synthase from Rhodopseudomonas palustris (strain ATCC BAA-98 / CGA009).